A 432-amino-acid chain; its full sequence is UDP-glucosyltransferase B1 (432 aa).

Belongs to the UDP-glycosyltransferase family.

It carries out the reaction (9Z)-17-hydroxyoctadec-9-enoate 17-O-beta-D-glucoside + UDP-alpha-D-glucose = (9Z)-17-hydroxyoctadec-9-enoate 17-O-sophoroside + UDP + H(+). Its function is as follows. Catalyzes the second glycosylation step of sophorolipid biosynthesis, the further glucosylation of the previoulsy formed glucolipid to give rise to an acidic sophorolipid. The polypeptide is UDP-glucosyltransferase B1 (Starmerella bombicola (Yeast)).